A 290-amino-acid polypeptide reads, in one-letter code: Pyridoxal kinase PdxY (290 aa).

Substrate contacts are provided by residues S12 and 47 to 48 (TQ). ATP-binding positions include D114, E151, K184, and 211-214 (RPLL). D225 serves as a coordination point for substrate.

The protein belongs to the pyridoxine kinase family. PdxY subfamily. Homodimer. The cofactor is Mg(2+).

The enzyme catalyses pyridoxal + ATP = pyridoxal 5'-phosphate + ADP + H(+). It participates in cofactor metabolism; pyridoxal 5'-phosphate salvage; pyridoxal 5'-phosphate from pyridoxal: step 1/1. Pyridoxal kinase involved in the salvage pathway of pyridoxal 5'-phosphate (PLP). Catalyzes the phosphorylation of pyridoxal to PLP. The polypeptide is Pyridoxal kinase PdxY (Pseudomonas fluorescens (strain ATCC BAA-477 / NRRL B-23932 / Pf-5)).